The sequence spans 338 residues: Tetraacyldisaccharide 4'-kinase (338 aa).

51–58 (HLGGAGKT) is a binding site for ATP.

It belongs to the LpxK family.

The catalysed reaction is a lipid A disaccharide + ATP = a lipid IVA + ADP + H(+). It functions in the pathway glycolipid biosynthesis; lipid IV(A) biosynthesis; lipid IV(A) from (3R)-3-hydroxytetradecanoyl-[acyl-carrier-protein] and UDP-N-acetyl-alpha-D-glucosamine: step 6/6. Its function is as follows. Transfers the gamma-phosphate of ATP to the 4'-position of a tetraacyldisaccharide 1-phosphate intermediate (termed DS-1-P) to form tetraacyldisaccharide 1,4'-bis-phosphate (lipid IVA). The chain is Tetraacyldisaccharide 4'-kinase from Rhodopseudomonas palustris (strain HaA2).